The following is a 74-amino-acid chain: Beta-defensin 39 (74 aa).

An N-terminal signal peptide occupies residues 1–23 (MKISYFLLLILSLGSSQINPVSG). 3 disulfides stabilise this stretch: C29–C58, C36–C51, and C41–C59.

This sequence belongs to the beta-defensin family. In terms of tissue distribution, only expressed in epididymis (caput, corpus and cauda).

It is found in the secreted. Its function is as follows. Has antibacterial activity. The polypeptide is Beta-defensin 39 (Defb39) (Mus musculus (Mouse)).